We begin with the raw amino-acid sequence, 404 residues long: Cysteine desulfurase IscS (404 aa).

Pyridoxal 5'-phosphate-binding positions include 75–76 (AT), asparagine 155, glutamine 183, and 203–205 (SGH). The residue at position 206 (lysine 206) is an N6-(pyridoxal phosphate)lysine. Threonine 243 serves as a coordination point for pyridoxal 5'-phosphate. Residue cysteine 328 is the Cysteine persulfide intermediate of the active site. Cysteine 328 provides a ligand contact to [2Fe-2S] cluster.

It belongs to the class-V pyridoxal-phosphate-dependent aminotransferase family. NifS/IscS subfamily. In terms of assembly, homodimer. Forms a heterotetramer with IscU, interacts with other sulfur acceptors. The cofactor is pyridoxal 5'-phosphate.

The protein localises to the cytoplasm. It catalyses the reaction (sulfur carrier)-H + L-cysteine = (sulfur carrier)-SH + L-alanine. It participates in cofactor biosynthesis; iron-sulfur cluster biosynthesis. Functionally, master enzyme that delivers sulfur to a number of partners involved in Fe-S cluster assembly, tRNA modification or cofactor biosynthesis. Catalyzes the removal of elemental sulfur atoms from cysteine to produce alanine. Functions as a sulfur delivery protein for Fe-S cluster synthesis onto IscU, an Fe-S scaffold assembly protein, as well as other S acceptor proteins. This chain is Cysteine desulfurase IscS, found in Pectobacterium atrosepticum (strain SCRI 1043 / ATCC BAA-672) (Erwinia carotovora subsp. atroseptica).